Consider the following 141-residue polypeptide: MSIQRTLSIIKPDAVAKNVIGQIVARFEQAGLKVIAARLQQLSRADAERFYAVHKERPFFKDLVDFMVSGPVFVQVLEGENAIQVNRDLMGATDPKKAAPGTIRADFADSIDANAVHGSDAPETAAVEVAFFFPEINIHSR.

ATP is bound by residues Lys-11, Phe-59, Arg-87, Thr-93, Arg-104, and Asn-114. The Pros-phosphohistidine intermediate role is filled by His-117.

This sequence belongs to the NDK family. In terms of assembly, homotetramer. The cofactor is Mg(2+).

Its subcellular location is the cytoplasm. It catalyses the reaction a 2'-deoxyribonucleoside 5'-diphosphate + ATP = a 2'-deoxyribonucleoside 5'-triphosphate + ADP. The catalysed reaction is a ribonucleoside 5'-diphosphate + ATP = a ribonucleoside 5'-triphosphate + ADP. In terms of biological role, major role in the synthesis of nucleoside triphosphates other than ATP. The ATP gamma phosphate is transferred to the NDP beta phosphate via a ping-pong mechanism, using a phosphorylated active-site intermediate. The sequence is that of Nucleoside diphosphate kinase from Bordetella avium (strain 197N).